Here is a 705-residue protein sequence, read N- to C-terminus: 3-hydroxypropionate--CoA ligase [ADP-forming] (705 aa).

The 37-residue stretch at 25–61 folds into the ATP-grasp domain; it reads KSILKNYGVKVPPYALVTSAEEAAKEAKKIGFPLVMK. An ATP-binding site is contributed by 51–61; that stretch reads AKKIGFPLVMK.

The protein in the N-terminal section; belongs to the acetate CoA ligase beta subunit family. In the C-terminal section; belongs to the acetate CoA ligase alpha subunit family. Requires Mg(2+) as cofactor. The cofactor is Mn(2+).

The enzyme catalyses 3-hydroxypropanoate + ATP + CoA = 3-hydroxypropanoyl-CoA + ADP + phosphate. In terms of biological role, involved in thaumarchaeal hydroxypropionate/hydroxybutyrate (HP/HB) cycle, a modified version of the autotrophic HP/HB cycle of Crenarchaeota. Catalyzes the formation of 3-hydroxypropionyl-CoA, ADP and phosphate from 3-hydroxypropionate, coenzyme A (CoA) and ATP. Can also use 4-hydroxybutyrate, propionate and butyrate, with poor catalytic efficiency. This is 3-hydroxypropionate--CoA ligase [ADP-forming] from Nitrosopumilus maritimus (strain SCM1).